Consider the following 249-residue polypeptide: Isoamyl acetate-hydrolyzing esterase 1 homolog (249 aa).

Serine 24 (nucleophile) is an active-site residue. Lysine 63 is modified (N6-succinyllysine). The active-site Proton donor is aspartate 197. Histidine 200 serves as the catalytic Proton acceptor.

This sequence belongs to the 'GDSL' lipolytic enzyme family. IAH1 subfamily.

Probable lipase. This Bos taurus (Bovine) protein is Isoamyl acetate-hydrolyzing esterase 1 homolog (IAH1).